A 322-amino-acid chain; its full sequence is Labrum-interacting protein from saliva LIPS-2 (322 aa).

The first 20 residues, Met-1–Pro-20, serve as a signal peptide directing secretion. The cysteines at positions 27 and 62 are disulfide-linked. 2 N-linked (GlcNAc...) asparagine glycosylation sites follow: Asn-168 and Asn-175. A disulfide bridge links Cys-249 with Cys-295.

In terms of assembly, monomer in solution. Interacts (via the N-terminal domain) with cuticular protein Cp19 (via the C-terminus). Proteolytically cleaved by human mast cell tryptase and chymase. In terms of processing, glycosylated. Female salivary gland (at protein level). Female saliva (at protein level).

It localises to the secreted. In terms of biological role, salivary protein that promotes mosquito blood feeding on the vertebrate host by inducing morphological changes in the mosquito labrum. Interacts with the mosquito labrum end tip and triggers salivation and probing. Modulates enzymatic activities of human tryptase and chymase. This Aedes albopictus (Asian tiger mosquito) protein is Labrum-interacting protein from saliva LIPS-2.